Here is a 499-residue protein sequence, read N- to C-terminus: MEEFKRYLELDRSQQHDFVYPLIFQEYIYALAHDHGLTRSIFLENIGYDNKFSLLIVKHLIIQMYQQNHFLFSANDSNQNPFFGHNTNLYSQMILEGFVAVVEIPFSLFSLEGKEIVKSQNLRSIHSIFPFLEDKFSHLNYVLDILIPHSIHLEISVQTLRYWVKDASSLYLLRFFLHMYWNWNSLITPKKSSFYFSKRNQRLFLFLYNFHICEYESIFVFLRKQSSHLRSISSGTFLERRYFYGKIEHFLEVFTKDFQVILWLFKDPFIHYVRYQGKYILASKGTSLLMNKWKSYLVNFWQCYFYMWSQPGRIHINQLSKHSPDFLGYLSSVRLNPSMVRSQMLENSFLIGNAIKRFDTIVPIIPMIGSLSKAKFCNVLGHPISKPVWADLSNSDIIDRFGRIYRNLSHYHSGSSKKTSLYRIKYILRLSCARTLARKHKSTVRAFLKRLGSELLEEFFMGEEQVFSLTFPSSTSQGLYRRRIWYLDIVCINDLASHE.

The protein belongs to the intron maturase 2 family. MatK subfamily.

The protein localises to the plastid. It is found in the chloroplast. Usually encoded in the trnK tRNA gene intron. Probably assists in splicing its own and other chloroplast group II introns. This is Maturase K from Camellia sinensis (Tea plant).